We begin with the raw amino-acid sequence, 208 residues long: uncharacterized protein (208 aa).

The tract at residues 126 to 151 is disordered; the sequence is VGSGSGSDSSSGSTSSPNTVNNYNSD. A compositionally biased stretch (low complexity) spans 131–141; sequence GSDSSSGSTSS.

This is an uncharacterized protein from Dictyostelium discoideum (Social amoeba).